The sequence spans 503 residues: Cytochrome P450 monooxygenase lnbC (503 aa).

A helical transmembrane segment spans residues 14-34 (VVLLLSSVWIAVHLVLAAYNV). 2 N-linked (GlcNAc...) asparagine glycosylation sites follow: Asn-94 and Asn-169. Cys-446 serves as a coordination point for heme.

This sequence belongs to the cytochrome P450 family. Heme is required as a cofactor.

Its subcellular location is the membrane. Its pathway is secondary metabolite biosynthesis. In terms of biological role, cytochrome P450 monooxygenase; part of the lnb gene cluster that mediates the biosynthesis of diastereomeric piperazines. Lna and lnb clusters encode sets of enzymes that produce overlapping sets of previously undescribed metabolites such as piperazinomycin-like metabolites or morpholine. The lna and lnb biosynthetic pathways appear to be part of a signaling network that controls the formation of sclerotia, a resilient overwintering structure. One primary function of the non-canonical nonribosomal peptide synthetases lnaA and lnbA consists in the reduction of L-tyrosine. The presence in the clusters of tailoring enzymes such as the oxidoreductases lnaB, lnbB, lnaE or lnbE, as well as of the cytochrome P450 monooxygenases lnaC, lnaD, or lnbC, might explain formation of various diastereomeric piperazines. The chain is Cytochrome P450 monooxygenase lnbC from Aspergillus flavus (strain ATCC 200026 / FGSC A1120 / IAM 13836 / NRRL 3357 / JCM 12722 / SRRC 167).